Here is a 107-residue protein sequence, read N- to C-terminus: Large ribosomal subunit protein uL24 (107 aa).

The protein belongs to the universal ribosomal protein uL24 family. In terms of assembly, part of the 50S ribosomal subunit.

Its function is as follows. One of two assembly initiator proteins, it binds directly to the 5'-end of the 23S rRNA, where it nucleates assembly of the 50S subunit. In terms of biological role, one of the proteins that surrounds the polypeptide exit tunnel on the outside of the subunit. This chain is Large ribosomal subunit protein uL24, found in Carboxydothermus hydrogenoformans (strain ATCC BAA-161 / DSM 6008 / Z-2901).